Reading from the N-terminus, the 225-residue chain is Large ribosomal subunit protein uL1 (225 aa).

The protein belongs to the universal ribosomal protein uL1 family. As to quaternary structure, part of the 50S ribosomal subunit.

Functionally, binds directly to 23S rRNA. The L1 stalk is quite mobile in the ribosome, and is involved in E site tRNA release. Protein L1 is also a translational repressor protein, it controls the translation of the L11 operon by binding to its mRNA. This chain is Large ribosomal subunit protein uL1, found in Rhodopirellula baltica (strain DSM 10527 / NCIMB 13988 / SH1).